Reading from the N-terminus, the 430-residue chain is UPF0597 protein CV_1824 (430 aa).

This sequence belongs to the UPF0597 family.

The polypeptide is UPF0597 protein CV_1824 (Chromobacterium violaceum (strain ATCC 12472 / DSM 30191 / JCM 1249 / CCUG 213 / NBRC 12614 / NCIMB 9131 / NCTC 9757 / MK)).